The primary structure comprises 203 residues: Small ribosomal subunit protein uS2 (203 aa).

This sequence belongs to the universal ribosomal protein uS2 family.

This chain is Small ribosomal subunit protein uS2, found in Methanopyrus kandleri (strain AV19 / DSM 6324 / JCM 9639 / NBRC 100938).